A 299-amino-acid chain; its full sequence is tRNA dimethylallyltransferase (299 aa).

11 to 18 (GPTAVGKT) contacts ATP. Substrate is bound at residue 13 to 18 (TAVGKT). The interval 36 to 39 (DSQQ) is interaction with substrate tRNA.

The protein belongs to the IPP transferase family. Monomer. Mg(2+) is required as a cofactor.

The catalysed reaction is adenosine(37) in tRNA + dimethylallyl diphosphate = N(6)-dimethylallyladenosine(37) in tRNA + diphosphate. Functionally, catalyzes the transfer of a dimethylallyl group onto the adenine at position 37 in tRNAs that read codons beginning with uridine, leading to the formation of N6-(dimethylallyl)adenosine (i(6)A). The protein is tRNA dimethylallyltransferase of Streptococcus pyogenes serotype M4 (strain MGAS10750).